The chain runs to 328 residues: Aspartate carbamoyltransferase catalytic subunit (328 aa).

Carbamoyl phosphate-binding residues include R70 and T71. L-aspartate is bound at residue K98. Carbamoyl phosphate contacts are provided by R120, H150, and Q153. L-aspartate-binding residues include R183 and R238. Residues G279 and P280 each coordinate carbamoyl phosphate.

The protein belongs to the aspartate/ornithine carbamoyltransferase superfamily. ATCase family. Heterododecamer (2C3:3R2) of six catalytic PyrB chains organized as two trimers (C3), and six regulatory PyrI chains organized as three dimers (R2).

The enzyme catalyses carbamoyl phosphate + L-aspartate = N-carbamoyl-L-aspartate + phosphate + H(+). Its pathway is pyrimidine metabolism; UMP biosynthesis via de novo pathway; (S)-dihydroorotate from bicarbonate: step 2/3. Functionally, catalyzes the condensation of carbamoyl phosphate and aspartate to form carbamoyl aspartate and inorganic phosphate, the committed step in the de novo pyrimidine nucleotide biosynthesis pathway. In Methylococcus capsulatus (strain ATCC 33009 / NCIMB 11132 / Bath), this protein is Aspartate carbamoyltransferase catalytic subunit.